The following is a 422-amino-acid chain: 3-isopropylmalate dehydratase large subunit (422 aa).

3 residues coordinate [4Fe-4S] cluster: C303, C363, and C366.

This sequence belongs to the aconitase/IPM isomerase family. LeuC type 2 subfamily. In terms of assembly, heterodimer of LeuC and LeuD. The cofactor is [4Fe-4S] cluster.

The enzyme catalyses (2R,3S)-3-isopropylmalate = (2S)-2-isopropylmalate. Its pathway is amino-acid biosynthesis; L-leucine biosynthesis; L-leucine from 3-methyl-2-oxobutanoate: step 2/4. Catalyzes the isomerization between 2-isopropylmalate and 3-isopropylmalate, via the formation of 2-isopropylmaleate. This is 3-isopropylmalate dehydratase large subunit from Wolinella succinogenes (strain ATCC 29543 / DSM 1740 / CCUG 13145 / JCM 31913 / LMG 7466 / NCTC 11488 / FDC 602W) (Vibrio succinogenes).